The sequence spans 509 residues: Surface lipoprotein assembly modifier (509 aa).

The N-terminal stretch at 1–32 (MNLMINLKPLTFLPFFGRLVFLSGVIYNTAWA) is a signal peptide. An N-terminal domain region spans residues 33–204 (NTVIPVDNSR…SYIDTINQRD (172 aa)). A disordered region spans residues 43–72 (PDETFSQTSPKQHLFSQKPKPTEPTSSASS). Polar residues predominate over residues 46–57 (TFSQTSPKQHLF). The stretch at 120–153 (FLLKWAQAVVARKQGKLNESVRLYRQIIAEKPNL) is one TPR repeat. Residues 205 to 509 (SWNVYGGVNY…RIYLTFSKTF (305 aa)) form a C-terminal probable beta barrel region. The next 14 beta stranded transmembrane spans lie at 206–216 (WNVYGGVNYLH), 245–256 (LSYFINLSKNWS), 261–270 (FFTEFSADIN), 284–294 (STRLNLGGGYR), 298–308 (TEVKLMPFVEQ), 331–341 (SGINLDVDYWL), 345–355 (WKISTVLEYTE), 371–381 (YSISNTLIYMP), 386–395 (FWFVGLDYYQ), 408–417 (QGIRLGWGQE), 423–432 (STRLQTSYAT), 461–470 (GVNFTIWHRS), 476–485 (ITPKITWAYQ), and 499–509 (NRIYLTFSKTF).

It belongs to the Slam family.

The protein resides in the cell outer membrane. Its function is as follows. Required for correct export to the cell surface of some cell outer membrane lipoproteins (tested with PM1514) upon heterologous expression in E.coli and probably also in Pasteurella. This chain is Surface lipoprotein assembly modifier, found in Pasteurella multocida (strain Pm70).